The primary structure comprises 733 residues: Putative cyclic nucleotide-gated ion channel 9 (733 aa).

The Cytoplasmic portion of the chain corresponds to 1–117 (MLDCGKKAVK…DKFLLLCNKL (117 aa)). A helical transmembrane segment spans residues 118-138 (FVTSCILAVSVDPLFLYLPFV). Residues 139–151 (KDNEKCIGIDRKL) are Extracellular-facing. The chain crosses the membrane as a helical span at residues 152–172 (AIIATTLRTVIDAFYLFHMAL). At 173-207 (RFRTAFVAPSSRVFGRGELVIDPAQIAKRYLQQYF) the chain is on the cytoplasmic side. A helical transmembrane segment spans residues 208 to 228 (IIDFLSVLPLPQIVVWRFLYI). The Extracellular portion of the chain corresponds to 229–239 (SKGASVLATKR). The chain crosses the membrane as a helical span at residues 240 to 260 (ALRSIILVQYIPRFIRLYPLS). Residues 261-280 (SELKRTAGVFAETAWAGAAY) are Cytoplasmic-facing. The helical transmembrane segment at 281–301 (YLLLYMLASHIVGAIWYLLAL) threads the bilayer. Over 302-406 (ERYNGCWTKV…GQGLETSTYP (105 aa)) the chain is Extracellular. Residues 407-427 (GEVIFSIALAIAGLLLFALLI) traverse the membrane as a helical segment. Residues 428-733 (GNMQTYLQSL…EPDFSADDTS (306 aa)) are Cytoplasmic-facing. Residues 513 to 637 (LFEN…SRQV) and glutamate 584 contribute to the a nucleoside 3',5'-cyclic phosphate site. The segment at 629 to 644 (FRRLHSRQVQHTFRFY) is calmodulin-binding. Positions 649-678 (RTWAAIFIQAAWRRYVKKKKLEQLRKEEEE) constitute an IQ domain.

The protein belongs to the cyclic nucleotide-gated cation channel (TC 1.A.1.5) family. Homotetramer or heterotetramer.

Its subcellular location is the cell membrane. Its function is as follows. Putative cyclic nucleotide-gated ion channel. The polypeptide is Putative cyclic nucleotide-gated ion channel 9 (CNGC9) (Arabidopsis thaliana (Mouse-ear cress)).